Reading from the N-terminus, the 330-residue chain is tRNA (cytosine(38)-C(5))-methyltransferase (330 aa).

Residues 7 to 330 (LRVLELYSGI…ISLLLEPLNF (324 aa)) form the SAM-dependent MTase C5-type domain. C81 is an active-site residue.

The protein belongs to the class I-like SAM-binding methyltransferase superfamily. C5-methyltransferase family.

The protein localises to the cytoplasm. The protein resides in the nucleus. The enzyme catalyses cytidine(38) in tRNA + S-adenosyl-L-methionine = 5-methylcytidine(38) in tRNA + S-adenosyl-L-homocysteine + H(+). Its function is as follows. Specifically methylates cytosine 38 in the anticodon loop of tRNA(Asp). Can also methylate cytosine 38 in tRNA(Glu), albeit to a lower level, but not tRNA(Lys). Pmt1-dependent tRNA methylation is induced by nitrogen limitation and depends on the nutrient-sensing protein kinase sck2. Does not have DNA-methylation activity. This chain is tRNA (cytosine(38)-C(5))-methyltransferase (pmt1), found in Schizosaccharomyces pombe (strain 972 / ATCC 24843) (Fission yeast).